The chain runs to 561 residues: DNA ligase B (561 aa).

Lys128 serves as the catalytic N6-AMP-lysine intermediate.

The protein belongs to the NAD-dependent DNA ligase family. LigB subfamily.

The enzyme catalyses NAD(+) + (deoxyribonucleotide)n-3'-hydroxyl + 5'-phospho-(deoxyribonucleotide)m = (deoxyribonucleotide)n+m + AMP + beta-nicotinamide D-nucleotide.. In terms of biological role, catalyzes the formation of phosphodiester linkages between 5'-phosphoryl and 3'-hydroxyl groups in double-stranded DNA using NAD as a coenzyme and as the energy source for the reaction. This Pseudomonas syringae pv. syringae (strain B728a) protein is DNA ligase B.